Consider the following 664-residue polypeptide: L-type lectin-domain containing receptor kinase I.3 (664 aa).

Residues 1 to 21 (MACRLYLALIFSCVYLICLSS) form the signal peptide. Over 22-286 (QQETGFVYNG…PKEEKKKLSP (265 aa)) the chain is Extracellular. The segment at 24 to 257 (ETGFVYNGFE…NHYILGWSFS (234 aa)) is legume-lectin like. 7 N-linked (GlcNAc...) asparagine glycosylation sites follow: asparagine 55, asparagine 125, asparagine 128, asparagine 181, asparagine 204, asparagine 225, and asparagine 267. Residues 287-307 (LLIGLVILLVIPVVMVLGGVY) form a helical membrane-spanning segment. At 308–664 (WYRRKKYAEV…THTILDGHGR (357 aa)) the chain is on the cytoplasmic side. The 278-residue stretch at 342 to 619 (FRKDCRVGKG…LNQDLPLPIF (278 aa)) folds into the Protein kinase domain. ATP contacts are provided by residues 348-356 (VGKGGFGEV) and lysine 370. The active-site Proton acceptor is the aspartate 466.

It in the C-terminal section; belongs to the protein kinase superfamily. Ser/Thr protein kinase family. The protein in the N-terminal section; belongs to the leguminous lectin family. Autophosphorylated on Ser and Thr residues. Mostly expressed in roots and flowers, and, to a lower extent, in leaves.

The protein resides in the cell membrane. The enzyme catalyses L-seryl-[protein] + ATP = O-phospho-L-seryl-[protein] + ADP + H(+). The catalysed reaction is L-threonyl-[protein] + ATP = O-phospho-L-threonyl-[protein] + ADP + H(+). Its function is as follows. Involved in resistance response to the pathogenic fungus Alternaria brassicicola. The sequence is that of L-type lectin-domain containing receptor kinase I.3 from Arabidopsis thaliana (Mouse-ear cress).